Here is a 129-residue protein sequence, read N- to C-terminus: Glycine cleavage system H protein (129 aa).

Positions 24–106 (TYTVGITEHA…YAGGWIFKIK (83 aa)) constitute a Lipoyl-binding domain. An N6-lipoyllysine modification is found at Lys65.

Belongs to the GcvH family. As to quaternary structure, the glycine cleavage system is composed of four proteins: P, T, L and H. (R)-lipoate serves as cofactor.

The glycine cleavage system catalyzes the degradation of glycine. The H protein shuttles the methylamine group of glycine from the P protein to the T protein. The sequence is that of Glycine cleavage system H protein from Escherichia coli O45:K1 (strain S88 / ExPEC).